The following is a 224-amino-acid chain: UPF0441 protein ECA0329 (224 aa).

Residues 180–224 (TALAPKPATTSTITRGGFGETVAKQNSMQRSSASSNSSSSRSMGG) form a disordered region. Over residues 204–224 (QNSMQRSSASSNSSSSRSMGG) the composition is skewed to low complexity.

The protein belongs to the UPF0441 family.

The protein is UPF0441 protein ECA0329 of Pectobacterium atrosepticum (strain SCRI 1043 / ATCC BAA-672) (Erwinia carotovora subsp. atroseptica).